The sequence spans 292 residues: Elongation factor Ts (292 aa).

Residues T82–V85 form an involved in Mg(2+) ion dislocation from EF-Tu region.

This sequence belongs to the EF-Ts family.

The protein localises to the cytoplasm. Functionally, associates with the EF-Tu.GDP complex and induces the exchange of GDP to GTP. It remains bound to the aminoacyl-tRNA.EF-Tu.GTP complex up to the GTP hydrolysis stage on the ribosome. This is Elongation factor Ts from Legionella pneumophila subsp. pneumophila (strain Philadelphia 1 / ATCC 33152 / DSM 7513).